A 334-amino-acid polypeptide reads, in one-letter code: tRNA uridine(34) hydroxylase (334 aa).

A Rhodanese domain is found at 123 to 217 (SDPDVILVDT…YLEEVKAEES (95 aa)). Cys-177 functions as the Cysteine persulfide intermediate in the catalytic mechanism.

It belongs to the TrhO family.

It catalyses the reaction uridine(34) in tRNA + AH2 + O2 = 5-hydroxyuridine(34) in tRNA + A + H2O. Its function is as follows. Catalyzes oxygen-dependent 5-hydroxyuridine (ho5U) modification at position 34 in tRNAs. The sequence is that of tRNA uridine(34) hydroxylase from Shewanella baltica (strain OS185).